The primary structure comprises 743 residues: NAD(P)H-quinone oxidoreductase subunit 5, chloroplastic (743 aa).

The next 16 membrane-spanning stretches (helical) occupy residues 9–29 (WIIP…LLFF), 40–60 (WAFI…DLSI), 89–109 (IDPL…LVLI), 125–145 (FAYM…SNFI), 147–167 (IYIF…FWFT), 185–205 (GDFG…SFEF), 219–239 (NEVN…GPVA), 258–278 (TPIS…FLVA), 280–300 (LLPL…IGII), 327–347 (LGYM…FHLI), 354–374 (ALLF…VGYF), 396–416 (TAFL…CFWS), 425–445 (WLYS…TAFY), 546–566 (ILFV…IGIP), 607–627 (LSVS…KPFY), and 721–741 (FYLL…FFFF).

It belongs to the complex I subunit 5 family. NDH is composed of at least 16 different subunits, 5 of which are encoded in the nucleus.

It is found in the plastid. It localises to the chloroplast thylakoid membrane. The enzyme catalyses a plastoquinone + NADH + (n+1) H(+)(in) = a plastoquinol + NAD(+) + n H(+)(out). The catalysed reaction is a plastoquinone + NADPH + (n+1) H(+)(in) = a plastoquinol + NADP(+) + n H(+)(out). In terms of biological role, NDH shuttles electrons from NAD(P)H:plastoquinone, via FMN and iron-sulfur (Fe-S) centers, to quinones in the photosynthetic chain and possibly in a chloroplast respiratory chain. The immediate electron acceptor for the enzyme in this species is believed to be plastoquinone. Couples the redox reaction to proton translocation, and thus conserves the redox energy in a proton gradient. This Citrus sinensis (Sweet orange) protein is NAD(P)H-quinone oxidoreductase subunit 5, chloroplastic (ndhF).